The following is a 102-amino-acid chain: NADH-quinone oxidoreductase subunit K (102 aa).

3 consecutive transmembrane segments (helical) span residues 6 to 26 (MEHG…GLMV), 30 to 50 (ILFI…AFVV), and 62 to 82 (VMFI…LAIL).

The protein belongs to the complex I subunit 4L family. NDH-1 is composed of 13 different subunits. Subunits NuoA, H, J, K, L, M, N constitute the membrane sector of the complex.

The protein resides in the cell inner membrane. It carries out the reaction a quinone + NADH + 5 H(+)(in) = a quinol + NAD(+) + 4 H(+)(out). In terms of biological role, NDH-1 shuttles electrons from NADH, via FMN and iron-sulfur (Fe-S) centers, to quinones in the respiratory chain. The immediate electron acceptor for the enzyme in this species is believed to be ubiquinone. Couples the redox reaction to proton translocation (for every two electrons transferred, four hydrogen ions are translocated across the cytoplasmic membrane), and thus conserves the redox energy in a proton gradient. The sequence is that of NADH-quinone oxidoreductase subunit K from Ectopseudomonas mendocina (strain ymp) (Pseudomonas mendocina).